Reading from the N-terminus, the 465-residue chain is MPIKRLDTVVVNTGSQNDQHSASVPPVYLSTTFKVDLNNEDAQNYDYSRSGNPTRSVLQHQIGKLYRVPQENVLAVSSGMTALDVILRGLVLLNGTDNHTPTIIAGDDLYGGTQRLLNFFKQQSHAVSVHVDTSDFEKFKTVFQSLDKVDCVLLESPTNPLCKVVDIPRILRFVKCISPDTTVVVDNTMMSGLNCNPLQLNPGCDVVYESATKYLNGHHDLMGGVIISKTPEIASKLYFVINSTGAGLSPMDSWLLVRGLKTLGVRLYQQQRNAMILAHWLENSCGFKPTRTNKATKTRFVGLRSNPDFKLHKSFNNGPGAVLSFETGSFEHSKRLVSSKKLSIWAVTVSFGCVNSLLSMPCKMSHASIDPELRKERDFPEDLVRLCCGIENIVDLKKDLLAAMVDADIIEVRENGKYLFNKLNKNLAVNTTIDDLHKPLSIYEEFYNQDLIRKDSELNIKSSKL.

The residue at position 213 (K213) is an N6-(pyridoxal phosphate)lysine.

Belongs to the trans-sulfuration enzymes family. It depends on pyridoxal 5'-phosphate as a cofactor.

Its subcellular location is the cytoplasm. The protein localises to the nucleus. It carries out the reaction L,L-cystathionine + H2O = L-homocysteine + pyruvate + NH4(+). The enzyme catalyses an S-substituted L-cysteine + H2O = a thiol + pyruvate + NH4(+). It functions in the pathway amino-acid biosynthesis; L-methionine biosynthesis via de novo pathway; L-homocysteine from L-cystathionine: step 1/1. This is Cystathionine beta-lyase (STR3) from Saccharomyces cerevisiae (strain ATCC 204508 / S288c) (Baker's yeast).